We begin with the raw amino-acid sequence, 155 residues long: Ribosomal RNA large subunit methyltransferase H (155 aa).

G103 is an S-adenosyl-L-methionine binding site.

This sequence belongs to the RNA methyltransferase RlmH family. In terms of assembly, homodimer.

It is found in the cytoplasm. It carries out the reaction pseudouridine(1915) in 23S rRNA + S-adenosyl-L-methionine = N(3)-methylpseudouridine(1915) in 23S rRNA + S-adenosyl-L-homocysteine + H(+). Functionally, specifically methylates the pseudouridine at position 1915 (m3Psi1915) in 23S rRNA. The chain is Ribosomal RNA large subunit methyltransferase H from Caulobacter vibrioides (strain ATCC 19089 / CIP 103742 / CB 15) (Caulobacter crescentus).